A 239-amino-acid polypeptide reads, in one-letter code: Phosphoribosylaminoimidazole-succinocarboxamide synthase (239 aa).

The protein belongs to the SAICAR synthetase family.

It catalyses the reaction 5-amino-1-(5-phospho-D-ribosyl)imidazole-4-carboxylate + L-aspartate + ATP = (2S)-2-[5-amino-1-(5-phospho-beta-D-ribosyl)imidazole-4-carboxamido]succinate + ADP + phosphate + 2 H(+). Its pathway is purine metabolism; IMP biosynthesis via de novo pathway; 5-amino-1-(5-phospho-D-ribosyl)imidazole-4-carboxamide from 5-amino-1-(5-phospho-D-ribosyl)imidazole-4-carboxylate: step 1/2. The sequence is that of Phosphoribosylaminoimidazole-succinocarboxamide synthase from Bacillus cytotoxicus (strain DSM 22905 / CIP 110041 / 391-98 / NVH 391-98).